We begin with the raw amino-acid sequence, 288 residues long: HTH-type transcriptional regulator CzcR (288 aa).

The HTH lysR-type domain occupies 1 to 58; sequence MELRDLQIFKCVAHHKSITGAAKELNYVQSNVTARIKQLENELKTPLFNRHKKGVSLS. Positions 18-37 form a DNA-binding region, H-T-H motif; sequence ITGAAKELNYVQSNVTARIK.

It belongs to the LysR transcriptional regulatory family.

This Bacillus subtilis (strain 168) protein is HTH-type transcriptional regulator CzcR (czcR).